The primary structure comprises 380 residues: Flap endonuclease 1-A (380 aa).

The interval 1 to 105 is N-domain; sequence MGIKGLTKLL…QELAKRYSKR (105 aa). Asp34 provides a ligand contact to Mg(2+). DNA is bound at residue Arg71. Residues Asp87, Glu159, Glu161, Asp180, and Asp182 each coordinate Mg(2+). The I-domain stretch occupies residues 123 to 254; it reads AIEKFSKRTV…QTALKLIRQH (132 aa). A DNA-binding site is contributed by Glu159. Residues Gly232 and Asp234 each coordinate DNA. Asp234 contributes to the Mg(2+) binding site. The tract at residues 336–344 is interaction with PCNA; it reads SQGRLESFF. The tract at residues 351 to 380 is disordered; that stretch reads SVPLKRKDTSEKPTKAVANKKTKGAGGKKK. Over residues 355–364 the composition is skewed to basic and acidic residues; the sequence is KRKDTSEKPT. Positions 368–380 are enriched in basic residues; it reads ANKKTKGAGGKKK.

This sequence belongs to the XPG/RAD2 endonuclease family. FEN1 subfamily. Interacts with PCNA. Three molecules of FEN1 bind to one PCNA trimer with each molecule binding to one PCNA monomer. PCNA stimulates the nuclease activity without altering cleavage specificity. It depends on Mg(2+) as a cofactor. In terms of processing, phosphorylated. Phosphorylation upon DNA damage induces relocalization to the nuclear plasma. In terms of tissue distribution, strongly expressed in proliferating tissues: root and shoot apical meristem, tiller bud, leaf, ligule primordia, marginal meristem of young leaves and panicles. Not expressed in mature leaves when exposed to UV.

It localises to the nucleus. It is found in the nucleolus. Its subcellular location is the nucleoplasm. The protein resides in the mitochondrion. Its activity is regulated as follows. Inhibited by NaCl. Functionally, structure-specific nuclease with 5'-flap endonuclease and 5'-3' exonuclease activities involved in DNA replication and repair. During DNA replication, cleaves the 5'-overhanging flap structure that is generated by displacement synthesis when DNA polymerase encounters the 5'-end of a downstream Okazaki fragment. It enters the flap from the 5'-end and then tracks to cleave the flap base, leaving a nick for ligation. Also involved in the long patch base excision repair (LP-BER) pathway, by cleaving within the apurinic/apyrimidinic (AP) site-terminated flap. Acts as a genome stabilization factor that prevents flaps from equilibrating into structures that lead to duplications and deletions. Also possesses 5'-3' exonuclease activity on nicked or gapped double-stranded DNA, and exhibits RNase H activity. Also involved in replication and repair of rDNA and in repairing mitochondrial DNA. May be required for cell proliferation. This is Flap endonuclease 1-A from Oryza sativa subsp. japonica (Rice).